An 803-amino-acid chain; its full sequence is Volume-regulated anion channel subunit LRRC8C (803 aa).

The Cytoplasmic segment spans residues 1-22 (MIPVTEFRQFSEQQPAFRVLKP). A helical transmembrane segment spans residues 23–47 (WWDVFTDYLSVAMLMIGVFGCTLQV). Residues 48–124 (MQDKIICLPK…CYERALHWYA (77 aa)) lie on the Extracellular side of the membrane. 2 cysteine pairs are disulfide-bonded: Cys-54–Cys-308 and Cys-115–Cys-293. 2 N-linked (GlcNAc...) asparagine glycosylation sites follow: Asn-64 and Asn-70. The helical transmembrane segment at 125 to 144 (KYFPYLVLIHTLVFMLCSNF) threads the bilayer. The Cytoplasmic portion of the chain corresponds to 145-262 (WFKFPGSSSK…EEGDILYAMY (118 aa)). Residues 177 to 209 (EVSGEDSEEKDNRKNNMNRSNTIQSGPEDSLVN) are disordered. A compositionally biased stretch (polar residues) spans 191–209 (NNMNRSNTIQSGPEDSLVN). Ser-212 and Ser-215 each carry phosphoserine. Residues 263 to 284 (VRQTVLKVIKFLIIIAYNSALV) form a helical membrane-spanning segment. Residues 285 to 314 (SKVQFTVDCNVDIQDMTGYKNFSCNHTMAH) are Extracellular-facing. The helical transmembrane segment at 315 to 339 (LFSKLSFCYLCFVSIYGLTCLYTLY) threads the bilayer. Residues 340–803 (WLFYRSLREY…SDVREQMKTE (464 aa)) are Cytoplasmic-facing. LRR repeat units follow at residues 397 to 420 (ENKLKQLNLNNEWTPDKLRQKLQT), 421 to 443 (NAHNRLELPLIMLSGLPDTVFEI), 446 to 466 (LQSLKLEIIKNVMIPATIAQL), 467 to 488 (DNLQELSLHQCSVKIHSAALSF), 490 to 513 (KENLKVLSVKFDDMRELPPWMYGL), 515 to 537 (NLEELYLVGSLSHDISRNVTLES), 541 to 563 (LKSLKILSIKSNVSKIPQAVVDV), 565 to 587 (SHLQKMCIHNDGTKLVMLNNLKK), 588 to 611 (MTNLTELELVHCDLERIPHAVFSL), 613 to 635 (SLQELDLKENNLKSIEEIVSFQH), 636 to 659 (LRKLTVLKLWHNSITYIPEHIKKL), 660 to 682 (TSLERLSFSHNKIEVLPSHLFLC), 684 to 705 (KIRYLDLSYNDIRFIPPEIGVL), 706 to 728 (QSLQYFSITCNKVESLPDELYFC), 730 to 751 (KLKTLKIGKNSLSVLSPKIGNL), 753 to 774 (FLSYLDVKGNHFEILPPELGDC), and 776 to 799 (ALKRAGLVVEDALFETLPSDVREQ).

It belongs to the LRRC8 family. In terms of assembly, heterohexamer; oligomerizes with other LRRC8 proteins (LRRC8A, LRRC8B, LRRC8D and/or LRRC8E) to form a heterohexamer. Homoheptamer; inactive, likely because it is not targeted to the plasma membrane in the absence of LRRC8A. In vivo, the subunit composition may depend primarily on expression levels, and heterooligomeric channels containing various proportions of the different LRRC8 proteins may coexist. In terms of tissue distribution, expressed at highest levels in skeletal muscle, and at moderate levels in heart, lung and peripheral blood leukocytes.

It localises to the cell membrane. It is found in the endoplasmic reticulum membrane. The enzyme catalyses chloride(in) = chloride(out). The catalysed reaction is iodide(out) = iodide(in). It carries out the reaction taurine(out) = taurine(in). It catalyses the reaction 2',3'-cGAMP(out) = 2',3'-cGAMP(in). Non-essential component of the volume-regulated anion channel (VRAC, also named VSOAC channel), an anion channel required to maintain a constant cell volume in response to extracellular or intracellular osmotic changes. The VRAC channel conducts iodide better than chloride and can also conduct organic osmolytes like taurine. Plays a redundant role in the efflux of amino acids, such as aspartate and glutamate, in response to osmotic stress. The VRAC channel also mediates transport of immunoreactive cyclic dinucleotide GMP-AMP (2'-3'-cGAMP), an immune messenger produced in response to DNA virus in the cytosol. Channel activity requires LRRC8A plus at least one other family member (LRRC8B, LRRC8C, LRRC8D or LRRC8E); channel characteristics depend on the precise subunit composition. This is Volume-regulated anion channel subunit LRRC8C from Homo sapiens (Human).